The chain runs to 160 residues: Phosphopantetheine adenylyltransferase (160 aa).

It belongs to the eukaryotic CoaD family.

It localises to the cytoplasm. The catalysed reaction is (R)-4'-phosphopantetheine + ATP + H(+) = 3'-dephospho-CoA + diphosphate. It functions in the pathway cofactor biosynthesis; coenzyme A biosynthesis. Reversibly transfers an adenylyl group from ATP to 4'-phosphopantetheine, yielding dephospho-CoA (dPCoA) and pyrophosphate. In Pyrococcus furiosus (strain ATCC 43587 / DSM 3638 / JCM 8422 / Vc1), this protein is Phosphopantetheine adenylyltransferase.